A 381-amino-acid polypeptide reads, in one-letter code: E3 ubiquitin-protein ligase RNF34 (381 aa).

An FYVE-type zinc finger spans residues 56–107; the sequence is EGPNIVCKACGLSFSVFRKKHVCCDCKKDFCSLCSVSQENLRRCSTCHLLQE. The 20-residue stretch at 115 to 134 folds into the SAP 1 domain; sequence LMRLKVKDLRQYLLLRNVPT. At serine 169 the chain carries Phosphoserine. The interval 216–261 is disordered; sequence LASANTDDEDGEEDDDDDDDDDDEDDDEQEENLEEQNPGLSKKKAR. Residues 221–249 are compositionally biased toward acidic residues; that stretch reads TDDEDGEEDDDDDDDDDDEDDDEQEENLE. A phosphoserine mark is found at serine 263 and serine 265. An SAP 2 domain is found at 273 to 287; it reads VEGMSVRQLKEILAR. The segment at 334 to 369 adopts an RING-type zinc-finger fold; sequence CRICMDAVIDCVLLECGHMVTCTKCGKRMSECPICR.

As to quaternary structure, interacts with CASP8 and CASP10. Interacts with p53/TP53; involved in p53/TP53 ubiquitination. Interacts (via RING-type zinc finger) with MDM2; the interaction stabilizes MDM2. Interacts (via RING-type zinc finger) with PPARGC1A. Interacts with NOD1. Post-translationally, proteolytically cleaved by caspases upon induction of apoptosis by TNF. Autoubiquitinated (in vitro). In terms of tissue distribution, ubiquitous. Detected in brain, cerebellum, midbrain, hippocampus, striatum, heart, lung, kidney, muscle, spleen and testis.

It localises to the cell membrane. Its subcellular location is the endomembrane system. It is found in the nucleus. The protein localises to the nucleus speckle. The protein resides in the cytoplasm. It localises to the cytosol. The catalysed reaction is S-ubiquitinyl-[E2 ubiquitin-conjugating enzyme]-L-cysteine + [acceptor protein]-L-lysine = [E2 ubiquitin-conjugating enzyme]-L-cysteine + N(6)-ubiquitinyl-[acceptor protein]-L-lysine.. Its pathway is protein modification; protein ubiquitination. In terms of biological role, E3 ubiquitin-protein ligase that regulates several biological processes through the ubiquitin-mediated proteasomal degradation of various target proteins. Ubiquitinates the caspases CASP8 and CASP10, promoting their proteasomal degradation, to negatively regulate cell death downstream of death domain receptors in the extrinsic pathway of apoptosis. May mediate 'Lys-48'-linked polyubiquitination of RIPK1 and its subsequent proteasomal degradation thereby indirectly regulating the tumor necrosis factor-mediated signaling pathway. Negatively regulates p53/TP53 through its direct ubiquitination and targeting to proteasomal degradation. Indirectly, may also negatively regulate p53/TP53 through ubiquitination and degradation of SFN. Mediates PPARGC1A proteasomal degradation probably through ubiquitination thereby indirectly regulating the metabolism of brown fat cells. Possibly involved in innate immunity, through 'Lys-48'-linked polyubiquitination of NOD1 and its subsequent proteasomal degradation. The chain is E3 ubiquitin-protein ligase RNF34 from Rattus norvegicus (Rat).